The primary structure comprises 673 residues: MAAAMEMAANPGGSGTCSDALFRELWHACAGPLVTVPKRGERVYYFPQGHMEQLEASTNQQLDQYLPMFNLPSKILCSVVNVELRAEADSDEVYAQIMLQPEADQSELTSLDPELQDLEKCTAHSFCKTLTASDTSTHGGFSVLRRHAEECLPQLDMSQNPPCQELVAKDLHGTEWHFRHIFRGQPRRHLLTTGWSVFVSSKRLVAGDAFIFLRGESGELRVGVRRLMRQVNNMPSSVISSHSMHLGVLATASHAISTGTLFSVFYKPRTSRSEFVVSVNKYLEAKKQNLSVGMRFKMRFEGDEAPERRFSGTIIGIGSVPAMSKSPWADSDWKSLKVQWDEPSAIVRPDRVSPWELEPLDASNPQPPQPPLRNKRARPPASPSVVAELPPSFGLWKPPSEAAQTLSFSEPQRAREIFPSIPASIFSASSHVEFNSKNEPSILSNQFYWSMRDSKTDSFSASTNKTRVERKQEPTTMGCRLFGIEISSAVEEALPAATVSGVGYDQTVLSVDVDSDQISQPSNGNKSDAPGTSSERSPLESQSRQVRSCTKVIMQGMAVGRAVDLTKLNGYGDLRSKLEEMFDIQGDLCPTLKRWQVVYTDDEDDMMLVGDDPWDEFCSMVKRIYIYSYEEAKLLAPKSKLPVIGDTIKLSSMNSSHESVDLDNHASVTNRDC.

Residues 126-228 (FCKTLTASDT…ELRVGVRRLM (103 aa)) constitute a DNA-binding region (TF-B3). Disordered stretches follow at residues 356 to 386 (ELEP…PSVV) and 514 to 545 (DSDQ…QSRQ). Positions 516–545 (DQISQPSNGNKSDAPGTSSERSPLESQSRQ) are enriched in polar residues. The PB1 domain occupies 547-639 (RSCTKVIMQG…EEAKLLAPKS (93 aa)).

This sequence belongs to the ARF family. Homodimers and heterodimers. As to expression, expressed in roots, culms, leaves and young panicles.

The protein resides in the nucleus. Its function is as follows. Auxin response factors (ARFs) are transcriptional factors that bind specifically to the DNA sequence 5'-TGTCTC-3' found in the auxin-responsive promoter elements (AuxREs). This chain is Auxin response factor 9 (ARF9), found in Oryza sativa subsp. japonica (Rice).